Consider the following 136-residue polypeptide: Small ribosomal subunit protein uS8c (136 aa).

The protein belongs to the universal ribosomal protein uS8 family. In terms of assembly, part of the 30S ribosomal subunit.

The protein localises to the plastid. In terms of biological role, one of the primary rRNA binding proteins, it binds directly to 16S rRNA central domain where it helps coordinate assembly of the platform of the 30S subunit. The chain is Small ribosomal subunit protein uS8c (rps8) from Helicosporidium sp. subsp. Simulium jonesii (Green alga).